A 453-amino-acid polypeptide reads, in one-letter code: Ribulose bisphosphate carboxylase large chain (453 aa).

Residues 1–2 (MS) constitute a propeptide that is removed on maturation. Residue Pro3 is modified to N-acetylproline. Lys14 bears the N6,N6,N6-trimethyllysine mark. Residues Asn123 and Thr173 each coordinate substrate. Lys175 acts as the Proton acceptor in catalysis. Position 177 (Lys177) interacts with substrate. The Mg(2+) site is built by Lys201, Asp203, and Glu204. Lys201 carries the N6-carboxylysine modification. His294 (proton acceptor) is an active-site residue. Positions 295, 327, and 379 each coordinate substrate.

It belongs to the RuBisCO large chain family. Type I subfamily. As to quaternary structure, heterohexadecamer of 8 large chains and 8 small chains; disulfide-linked. The disulfide link is formed within the large subunit homodimers. Mg(2+) is required as a cofactor. The disulfide bond which can form in the large chain dimeric partners within the hexadecamer appears to be associated with oxidative stress and protein turnover.

It is found in the plastid. It localises to the chloroplast. The catalysed reaction is 2 (2R)-3-phosphoglycerate + 2 H(+) = D-ribulose 1,5-bisphosphate + CO2 + H2O. It catalyses the reaction D-ribulose 1,5-bisphosphate + O2 = 2-phosphoglycolate + (2R)-3-phosphoglycerate + 2 H(+). Its function is as follows. RuBisCO catalyzes two reactions: the carboxylation of D-ribulose 1,5-bisphosphate, the primary event in carbon dioxide fixation, as well as the oxidative fragmentation of the pentose substrate in the photorespiration process. Both reactions occur simultaneously and in competition at the same active site. This Galium elongatum (Great marsh bedstraw) protein is Ribulose bisphosphate carboxylase large chain.